The sequence spans 359 residues: DNA replication and repair protein RecF (359 aa).

30–37 (GPNGSGKT) provides a ligand contact to ATP.

Belongs to the RecF family.

The protein resides in the cytoplasm. Its function is as follows. The RecF protein is involved in DNA metabolism; it is required for DNA replication and normal SOS inducibility. RecF binds preferentially to single-stranded, linear DNA. It also seems to bind ATP. This chain is DNA replication and repair protein RecF, found in Aliivibrio fischeri (strain ATCC 700601 / ES114) (Vibrio fischeri).